Here is a 180-residue protein sequence, read N- to C-terminus: Endoribonuclease YbeY (180 aa).

Zn(2+) is bound by residues His-136, His-140, and His-146.

Belongs to the endoribonuclease YbeY family. Requires Zn(2+) as cofactor.

The protein resides in the cytoplasm. Functionally, single strand-specific metallo-endoribonuclease involved in late-stage 70S ribosome quality control and in maturation of the 3' terminus of the 16S rRNA. This is Endoribonuclease YbeY from Synechococcus sp. (strain CC9902).